A 107-amino-acid polypeptide reads, in one-letter code: MEIKPNEKIRVRLESFNHELLNTSCQKIMEITQNNNVDNVGVVSLPTDKRIYCVLRSPHVNKDSREHFEIRTHKRILEISYDSSVNIFDLLVKSDLPPGVLYRICLS.

It belongs to the universal ribosomal protein uS10 family. In terms of assembly, part of the 30S ribosomal subunit.

It is found in the plastid. Its subcellular location is the chloroplast. In terms of biological role, involved in the binding of tRNA to the ribosomes. The protein is Small ribosomal subunit protein uS10c of Thalassiosira pseudonana (Marine diatom).